The following is a 32-amino-acid chain: Photosystem II reaction center protein T (32 aa).

A helical membrane pass occupies residues 3-23; that stretch reads AFAYVLILTLAVVTLFFAVAF.

It belongs to the PsbT family. As to quaternary structure, PSII is composed of 1 copy each of membrane proteins PsbA, PsbB, PsbC, PsbD, PsbE, PsbF, PsbH, PsbI, PsbJ, PsbK, PsbL, PsbM, PsbT, PsbX, PsbY, Psb30/Ycf12, peripheral proteins PsbO, CyanoQ (PsbQ), PsbU, PsbV and a large number of cofactors. It forms dimeric complexes.

It localises to the cellular thylakoid membrane. Its function is as follows. Found at the monomer-monomer interface of the photosystem II (PS II) dimer, plays a role in assembly and dimerization of PSII. PSII is a light-driven water plastoquinone oxidoreductase, using light energy to abstract electrons from H(2)O, generating a proton gradient subsequently used for ATP formation. This Prochlorococcus marinus (strain MIT 9301) protein is Photosystem II reaction center protein T.